A 488-amino-acid polypeptide reads, in one-letter code: 3-octaprenyl-4-hydroxybenzoate carboxy-lyase (488 aa).

Asn172 contacts Mn(2+). Prenylated FMN is bound by residues 175 to 177 (IYR), 189 to 191 (RWL), and 194 to 195 (RG). Glu238 contributes to the Mn(2+) binding site. Asp287 functions as the Proton donor in the catalytic mechanism.

This sequence belongs to the UbiD family. As to quaternary structure, homohexamer. Prenylated FMN is required as a cofactor. Requires Mn(2+) as cofactor.

Its subcellular location is the cell membrane. It catalyses the reaction a 4-hydroxy-3-(all-trans-polyprenyl)benzoate + H(+) = a 2-(all-trans-polyprenyl)phenol + CO2. It participates in cofactor biosynthesis; ubiquinone biosynthesis. In terms of biological role, catalyzes the decarboxylation of 3-octaprenyl-4-hydroxy benzoate to 2-octaprenylphenol, an intermediate step in ubiquinone biosynthesis. The sequence is that of 3-octaprenyl-4-hydroxybenzoate carboxy-lyase from Pseudomonas putida (strain ATCC 47054 / DSM 6125 / CFBP 8728 / NCIMB 11950 / KT2440).